A 1399-amino-acid chain; its full sequence is DNA-directed RNA polymerase subunit beta' (1399 aa).

Residues C70, C72, C85, and C88 each contribute to the Zn(2+) site. Mg(2+)-binding residues include D460, D462, and D464. Zn(2+)-binding residues include C814, C888, C895, and C898.

This sequence belongs to the RNA polymerase beta' chain family. As to quaternary structure, the RNAP catalytic core consists of 2 alpha, 1 beta, 1 beta' and 1 omega subunit. When a sigma factor is associated with the core the holoenzyme is formed, which can initiate transcription. It depends on Mg(2+) as a cofactor. The cofactor is Zn(2+).

The enzyme catalyses RNA(n) + a ribonucleoside 5'-triphosphate = RNA(n+1) + diphosphate. In terms of biological role, DNA-dependent RNA polymerase catalyzes the transcription of DNA into RNA using the four ribonucleoside triphosphates as substrates. The sequence is that of DNA-directed RNA polymerase subunit beta' from Pseudomonas fluorescens (strain SBW25).